The sequence spans 212 residues: Large ribosomal subunit protein bL25 (212 aa).

The interval 1–25 (MSQSTIHKIAVKKRTETGKNENNRL) is disordered. Over residues 13-24 (KRTETGKNENNR) the composition is skewed to basic and acidic residues.

The protein belongs to the bacterial ribosomal protein bL25 family. CTC subfamily. In terms of assembly, part of the 50S ribosomal subunit; part of the 5S rRNA/L5/L18/L25 subcomplex. Contacts the 5S rRNA. Binds to the 5S rRNA independently of L5 and L18.

In terms of biological role, this is one of the proteins that binds to the 5S RNA in the ribosome where it forms part of the central protuberance. In Leptospira borgpetersenii serovar Hardjo-bovis (strain JB197), this protein is Large ribosomal subunit protein bL25.